The following is a 172-amino-acid chain: Mitochondrial import inner membrane translocase subunit Tim17-B (172 aa).

Cysteine 9 and cysteine 78 form a disulfide bridge. 3 helical membrane passes run 17 to 37 (CGGA…IKGF), 61 to 77 (QIGG…STID), and 113 to 133 (VGSA…GILL). A disordered region spans residues 147 to 172 (FLEDPSQLTPKEGSPAPGYPNYQQYH).

The protein belongs to the Tim17/Tim22/Tim23 family. In terms of assembly, component of the TIM23 complex at least composed of TIMM23, TIMM17 (TIMM17A or TIMM17B) and TIMM50. The complex interacts with the TIMM44 component of the PAM complex. The complex also interacts with DNAJC15.

The protein localises to the mitochondrion inner membrane. Its function is as follows. Essential component of the TIM23 complex, a complex that mediates the translocation of transit peptide-containing proteins across the mitochondrial inner membrane. The sequence is that of Mitochondrial import inner membrane translocase subunit Tim17-B (Timm17b) from Mus musculus (Mouse).